The sequence spans 377 residues: 2-aminoethylphosphonate--pyruvate transaminase (377 aa).

The residue at position 194 (lysine 194) is an N6-(pyridoxal phosphate)lysine.

It belongs to the class-V pyridoxal-phosphate-dependent aminotransferase family. PhnW subfamily. In terms of assembly, homodimer. It depends on pyridoxal 5'-phosphate as a cofactor.

The catalysed reaction is (2-aminoethyl)phosphonate + pyruvate = phosphonoacetaldehyde + L-alanine. Its function is as follows. Involved in phosphonate degradation. This is 2-aminoethylphosphonate--pyruvate transaminase from Cupriavidus taiwanensis (strain DSM 17343 / BCRC 17206 / CCUG 44338 / CIP 107171 / LMG 19424 / R1) (Ralstonia taiwanensis (strain LMG 19424)).